The primary structure comprises 735 residues: Muskelin (735 aa).

At A2 the chain carries N-acetylalanine. The LisH domain maps to 172–204; the sequence is REQEAIRLCLKHFRQHNYTEAFESLQKKTKIAL. Positions 206–258 constitute a CTLH domain; sequence HPMLTDIHDKLVLKGDFDACEELIEKAVNDGLFNQYISQQEYKPRWSQIIPKS. Kelch repeat units lie at residues 284–330, 339–391, 408–458, 469–515, 526–578, and 597–651; these read TVYL…SCHK, QIYT…FDHQ, ILTC…SRIG, CLYV…TGFT, EIHV…SLQE, and VHYL…AQMD.

As to quaternary structure, homodimer; may form higher oligomers. Identified in the CTLH complex that contains GID4, RANBP9 and/or RANBP10, MKLN1, MAEA, RMND5A (or alternatively its paralog RMND5B), GID8, ARMC8, WDR26 and YPEL5. Within this complex, MAEA, RMND5A (or alternatively its paralog RMND5B), GID8, WDR26, and RANBP9 and/or RANBP10 form the catalytic core, while GID4, MKLN1, ARMC8 and YPEL5 have ancillary roles. Interacts with RANBP9. Part of a complex consisting of RANBP9, MKLN1 and GID8. Interacts with GABRA1. Interacts with the C-terminal tail of PTGER3.

The protein localises to the cytoplasm. Its subcellular location is the cytosol. It localises to the nucleus. The protein resides in the nucleoplasm. It is found in the cell projection. The protein localises to the ruffle. Its subcellular location is the cell cortex. It localises to the synapse. The protein resides in the postsynapse. Functionally, component of the CTLH E3 ubiquitin-protein ligase complex that selectively accepts ubiquitin from UBE2H and mediates ubiquitination and subsequent proteasomal degradation of the transcription factor HBP1. Required for internalization of the GABA receptor GABRA1 from the cell membrane via endosomes and subsequent GABRA1 degradation. Acts as a mediator of cell spreading and cytoskeletal responses to the extracellular matrix component THBS1. The protein is Muskelin (MKLN1) of Pongo abelii (Sumatran orangutan).